An 874-amino-acid chain; its full sequence is MKSAEIREAFLRFFEEKGHTRVASSSLIPANDPTLLFTNAGMNQFKDCFLGLEKRAYTRATTSQKCVRAGGKHNDLENVGYTARHHTFFEMLGNFSFGDYFKRDAIHYAWEFLTSDKWLKLPKEKLWVTVYATDDEAYDIWTKEVGVPAERMVRIGDNKGAPYASDNFWAMGDTGPCGPCTEIFFDHGEHIWGGPPGSPEEDGDRYIEIWNNVFMQFNRTADGVLHPLPAPSVDTGMGLERISAVLQHVNSNYEIDLFQSLLNAAADAIGCANEGQASLKVVADHIRSCGFLIADGVTPSNEGRGYVLRRIIRRACRHGNKLGAKGSFFHRIVAALVAEMGDAFPELKQQQAHIERVLKNEEEQFAKTLEQGLKILEQDLAGLAGSVIPGEVVFKLYDTYGFPVDLTGDIARERNLTLDEEGFEREMQAQRERARSASAFGMDYNSLVKVEGETRFIGYQGTSGSGKVLALFKQGMLVDSLSAGEEGVVVLDQTPFYAESGGQIGDCGYLEAQGLRFDVRDTSKAGGAFLHHGIVDSGTLTTGAQVEATVDASVRQATALNHSATHLLHAALREILGEHVSQKGSLVDSQRLRFDFSHFEAIKPEQLRALEDRVNAEIRRNSAVEIEETDIDTAKAKGAMALFGEKYGDTVRVLTMGGGFSVELCGGTHVNRTGDIGLFKITSEGGVAAGVRRIEAVTGAPALAYLNDAEEQLKQAASLVKGSRENLLDKLGGLLERNRQLEKELEQLKAKAASAAGNDLAASAVEVNGIRVLAARQDGLDGKALLALVDQLKNKLGSAVILLGGVQDDKVVLVAGVTQDLTSRLKAGDLMRQAAAAVGGKGGGRPDMAQGGGTDAAKLDEALALALPFAQQAL.

Residues histidine 562, histidine 566, cysteine 665, and histidine 669 each coordinate Zn(2+).

It belongs to the class-II aminoacyl-tRNA synthetase family. Zn(2+) is required as a cofactor.

The protein resides in the cytoplasm. It carries out the reaction tRNA(Ala) + L-alanine + ATP = L-alanyl-tRNA(Ala) + AMP + diphosphate. Functionally, catalyzes the attachment of alanine to tRNA(Ala) in a two-step reaction: alanine is first activated by ATP to form Ala-AMP and then transferred to the acceptor end of tRNA(Ala). Also edits incorrectly charged Ser-tRNA(Ala) and Gly-tRNA(Ala) via its editing domain. In Stutzerimonas stutzeri (strain A1501) (Pseudomonas stutzeri), this protein is Alanine--tRNA ligase.